A 368-amino-acid chain; its full sequence is DNA replication and repair protein RecF (368 aa).

30–37 (GNNAQGKT) is a binding site for ATP.

Belongs to the RecF family.

Its subcellular location is the cytoplasm. The RecF protein is involved in DNA metabolism; it is required for DNA replication and normal SOS inducibility. RecF binds preferentially to single-stranded, linear DNA. It also seems to bind ATP. The polypeptide is DNA replication and repair protein RecF (Streptococcus pyogenes serotype M18 (strain MGAS8232)).